A 546-amino-acid chain; its full sequence is Probable bifunctional SAT/APS kinase (546 aa).

Residues 1 to 370 (MEKIKYLKSI…LAETYVPKHK (370 aa)) are sulfate adenylyltransferase. Residues 371-546 (QGFCVWLTGL…FLKKEGFIKD (176 aa)) form an adenylsulfate kinase region. 379–386 (GLPCAGKS) contributes to the ATP binding site. The active-site Phosphoserine intermediate is serine 453.

In the N-terminal section; belongs to the sulfate adenylyltransferase family. The protein in the C-terminal section; belongs to the APS kinase family.

It catalyses the reaction sulfate + ATP + H(+) = adenosine 5'-phosphosulfate + diphosphate. The catalysed reaction is adenosine 5'-phosphosulfate + ATP = 3'-phosphoadenylyl sulfate + ADP + H(+). The protein operates within sulfur metabolism; hydrogen sulfide biosynthesis; sulfite from sulfate: step 1/3. It participates in sulfur metabolism; hydrogen sulfide biosynthesis; sulfite from sulfate: step 2/3. This is Probable bifunctional SAT/APS kinase (sat/cysC) from Aquifex aeolicus (strain VF5).